The chain runs to 398 residues: Acetate kinase (398 aa).

Residue asparagine 8 participates in Mg(2+) binding. Lysine 15 contacts ATP. Arginine 89 contacts substrate. Catalysis depends on aspartate 146, which acts as the Proton donor/acceptor. ATP contacts are provided by residues 206–210 (HIGNG), 283–285 (DMR), and 331–335 (GMGEN). Glutamate 383 is a binding site for Mg(2+).

Belongs to the acetokinase family. As to quaternary structure, homodimer. The cofactor is Mg(2+). Mn(2+) is required as a cofactor.

The protein localises to the cytoplasm. The enzyme catalyses acetate + ATP = acetyl phosphate + ADP. It participates in metabolic intermediate biosynthesis; acetyl-CoA biosynthesis; acetyl-CoA from acetate: step 1/2. Catalyzes the formation of acetyl phosphate from acetate and ATP. Can also catalyze the reverse reaction. The protein is Acetate kinase of Streptococcus pyogenes serotype M1.